Reading from the N-terminus, the 444-residue chain is ATP-dependent protease ATPase subunit HslU (444 aa).

ATP-binding positions include isoleucine 20, 62–67, aspartate 257, glutamate 322, and arginine 394; that span reads GVGKTE.

The protein belongs to the ClpX chaperone family. HslU subfamily. As to quaternary structure, a double ring-shaped homohexamer of HslV is capped on each side by a ring-shaped HslU homohexamer. The assembly of the HslU/HslV complex is dependent on binding of ATP.

The protein localises to the cytoplasm. Functionally, ATPase subunit of a proteasome-like degradation complex; this subunit has chaperone activity. The binding of ATP and its subsequent hydrolysis by HslU are essential for unfolding of protein substrates subsequently hydrolyzed by HslV. HslU recognizes the N-terminal part of its protein substrates and unfolds these before they are guided to HslV for hydrolysis. The protein is ATP-dependent protease ATPase subunit HslU of Bordetella avium (strain 197N).